We begin with the raw amino-acid sequence, 289 residues long: MSTYLIGDIHGCLDELLALLAQVNFDPQQDTLWLTGDLVARGPASLDVLRYVRSLGPAVRMVLGNHDLHLLAVYAGISRNKPKDRITPLLDAPDADELINWLRRQPVLQVDDQLKLIMAHAGITPQWDIETAKMCAREVEAVLSSDSYPLFLDAMYGDMPNNWSPELTGLARLRFSTNALTRMRFCFPNGQLDMICKDTPENAPAPLKPWFDLPRLVDPEYSIIFGHWASLEGKGVPEGIYGLDTGCCWGGDLTLLRWDDKRYFTQRAFKAEAEINNNNGFAAGEAVQH.

It belongs to the Ap4A hydrolase family.

It carries out the reaction P(1),P(4)-bis(5'-adenosyl) tetraphosphate + H2O = 2 ADP + 2 H(+). Hydrolyzes diadenosine 5',5'''-P1,P4-tetraphosphate to yield ADP. In Yersinia pestis bv. Antiqua (strain Antiqua), this protein is Bis(5'-nucleosyl)-tetraphosphatase, symmetrical.